The primary structure comprises 438 residues: Enolase (438 aa).

Gln163 is a (2R)-2-phosphoglycerate binding site. The active-site Proton donor is Glu205. Mg(2+) is bound by residues Asp243, Glu292, and Asp319. (2R)-2-phosphoglycerate-binding residues include Lys344, Arg373, Ser374, and Lys395. Lys344 acts as the Proton acceptor in catalysis.

This sequence belongs to the enolase family. Mg(2+) is required as a cofactor.

The protein localises to the cytoplasm. The protein resides in the secreted. It is found in the cell surface. It catalyses the reaction (2R)-2-phosphoglycerate = phosphoenolpyruvate + H2O. Its pathway is carbohydrate degradation; glycolysis; pyruvate from D-glyceraldehyde 3-phosphate: step 4/5. Catalyzes the reversible conversion of 2-phosphoglycerate (2-PG) into phosphoenolpyruvate (PEP). It is essential for the degradation of carbohydrates via glycolysis. The polypeptide is Enolase (Streptococcus agalactiae).